An 83-amino-acid chain; its full sequence is Putative defensin-like protein 150 (83 aa).

A signal peptide spans 1-25; sequence MMGKHIQLSFAILIMFTIFVLGAVG. Disulfide bonds link Cys35–Cys83, Cys44–Cys64, Cys49–Cys77, and Cys53–Cys79.

The protein belongs to the DEFL family.

It is found in the secreted. This is Putative defensin-like protein 150 (LCR32) from Arabidopsis thaliana (Mouse-ear cress).